Consider the following 452-residue polypeptide: Gastrin/cholecystokinin type B receptor (452 aa).

The disordered stretch occupies residues 1 to 21 (MELLKLNRSVQGPGPGSGSSL). Residues 1–57 (MELLKLNRSVQGPGPGSGSSLCRPGVSLLNSSSAGNLSCDPPRIRGTGTRELEMAIR) are Extracellular-facing. Asn7, Asn30, and Asn36 each carry an N-linked (GlcNAc...) asparagine glycan. The helical transmembrane segment at 58 to 79 (ITLYAVIFLMSVGGNVLIIVVL) threads the bilayer. Residues 80-87 (GLSRRLRT) are Cytoplasmic-facing. The chain crosses the membrane as a helical span at residues 88–109 (VTNAFLLSLAVSDLLLAVACMP). Residues 110–131 (FTLLPNLMGTFIFGTVICKAIS) are Extracellular-facing. The cysteines at positions 127 and 205 are disulfide-linked. A helical transmembrane segment spans residues 132 to 150 (YLMGVSVSVSTLNLVAIAL). Topologically, residues 151 to 170 (ERYSAICRPLQARVWQTRSH) are cytoplasmic. A helical transmembrane segment spans residues 171–189 (AARVILATWLLSGLLMVPY). Over 190–219 (PVYTMVQPVGPRVLQCMHRWPSARVQQTWS) the chain is Extracellular. Residues 220 to 242 (VLLLLLLFFIPGVVIAVAYGLIS) traverse the membrane as a helical segment. Topologically, residues 243–338 (RELYLGLHFD…KLLAKKRVVR (96 aa)) are cytoplasmic. Residues 257-286 (SETQSRARNQGGLPGGAAPGPVHQNGGCRP) are disordered. Residues 339–360 (MLLVIVLLFFLCWLPVYSVNTW) form a helical membrane-spanning segment. Residues 361-378 (RAFDGPGAQRALSGAPIS) are Extracellular-facing. A helical transmembrane segment spans residues 379–399 (FIHLLSYVSACVNPLVYCFMH). Residues 400–452 (RRFRQACLDTCARCCPRPPRARPQPLPDEDPPTPSIASLSRLSYTTISTLGPG) lie on the Cytoplasmic side of the membrane. The S-palmitoyl cysteine moiety is linked to residue Cys413. Positions 421–452 (RPQPLPDEDPPTPSIASLSRLSYTTISTLGPG) are disordered. Polar residues predominate over residues 434–452 (SIASLSRLSYTTISTLGPG).

The protein belongs to the G-protein coupled receptor 1 family. As to expression, parietal cells, pancreas, brain and various neoplastic tissues.

It is found in the cell membrane. Its function is as follows. Receptor for gastrin and cholecystokinin. The CCK-B receptors occur throughout the central nervous system where they modulate anxiety, analgesia, arousal, and neuroleptic activity. This receptor mediates its action by association with G proteins that activate a phosphatidylinositol-calcium second messenger system. This is Gastrin/cholecystokinin type B receptor (Cckbr) from Rattus norvegicus (Rat).